A 216-amino-acid chain; its full sequence is UPF0502 protein VCM66_A0698 (216 aa).

This sequence belongs to the UPF0502 family.

This chain is UPF0502 protein VCM66_A0698, found in Vibrio cholerae serotype O1 (strain M66-2).